The following is a 311-amino-acid chain: Thioredoxin reductase (311 aa).

35-42 (ERGIPGGQ) lines the FAD pocket. Cysteines 134 and 137 form a disulfide. 277–286 (DVRDKGLRQI) is a binding site for FAD.

Belongs to the class-II pyridine nucleotide-disulfide oxidoreductase family. Homodimer. FAD serves as cofactor.

It localises to the cytoplasm. The catalysed reaction is [thioredoxin]-dithiol + NADP(+) = [thioredoxin]-disulfide + NADPH + H(+). The sequence is that of Thioredoxin reductase (trxB) from Staphylococcus aureus (strain COL).